The sequence spans 390 residues: RNA polymerase sigma factor SigA (390 aa).

A compositionally biased stretch (acidic residues) spans 48–57 (FLEPQTDEDD). The interval 48-75 (FLEPQTDEDDAKSGKAAKSRRRTQSKKK) is disordered. A compositionally biased stretch (basic residues) spans 62–75 (KAAKSRRRTQSKKK). The interval 158-228 (MVQSNLRLVV…TRAIADQSRT (71 aa)) is sigma-70 factor domain-2. The Interaction with polymerase core subunit RpoC signature appears at 182–185 (DLIQ). Positions 237 to 312 (ETISRIKKTT…ESDGETPEDQ (76 aa)) are sigma-70 factor domain-3. Residues 325 to 378 (VLDSLSPRERDVLRLRYGLDDGRMKTLEEIGQIFNVTRERIRQIEAKALRKLRH) are sigma-70 factor domain-4. Residues 351–370 (LEEIGQIFNVTRERIRQIEA) constitute a DNA-binding region (H-T-H motif).

Belongs to the sigma-70 factor family. RpoD/SigA subfamily. As to quaternary structure, interacts transiently with the RNA polymerase catalytic core.

It localises to the cytoplasm. In terms of biological role, sigma factors are initiation factors that promote the attachment of RNA polymerase to specific initiation sites and are then released. This sigma factor is the primary sigma factor during exponential growth. The protein is RNA polymerase sigma factor SigA of Nostoc sp. (strain PCC 7120 / SAG 25.82 / UTEX 2576).